A 432-amino-acid polypeptide reads, in one-letter code: Adenylosuccinate synthetase 2 (432 aa).

GTP contacts are provided by residues 13–19 (GDEGKGK) and 41–43 (GHT). D14 functions as the Proton acceptor in the catalytic mechanism. 2 residues coordinate Mg(2+): D14 and G41. IMP-binding positions include 14–17 (DEGK), 39–42 (NAGH), T130, R144, Q225, T240, and R304. H42 functions as the Proton donor in the catalytic mechanism. 300–306 (ATTGRSR) contacts substrate. GTP is bound by residues R306, 332-334 (KLD), and 415-417 (STG).

The protein belongs to the adenylosuccinate synthetase family. As to quaternary structure, homodimer. Requires Mg(2+) as cofactor.

Its subcellular location is the cytoplasm. It catalyses the reaction IMP + L-aspartate + GTP = N(6)-(1,2-dicarboxyethyl)-AMP + GDP + phosphate + 2 H(+). It participates in purine metabolism; AMP biosynthesis via de novo pathway; AMP from IMP: step 1/2. Plays an important role in the de novo pathway of purine nucleotide biosynthesis. Catalyzes the first committed step in the biosynthesis of AMP from IMP. The sequence is that of Adenylosuccinate synthetase 2 from Photorhabdus laumondii subsp. laumondii (strain DSM 15139 / CIP 105565 / TT01) (Photorhabdus luminescens subsp. laumondii).